We begin with the raw amino-acid sequence, 227 residues long: Uracil-DNA glycosylase (227 aa).

Residue Asp-68 is the Proton acceptor of the active site.

The protein belongs to the uracil-DNA glycosylase (UDG) superfamily. UNG family.

Its subcellular location is the cytoplasm. It carries out the reaction Hydrolyzes single-stranded DNA or mismatched double-stranded DNA and polynucleotides, releasing free uracil.. Functionally, excises uracil residues from the DNA which can arise as a result of misincorporation of dUMP residues by DNA polymerase or due to deamination of cytosine. This Mycobacterium leprae (strain Br4923) protein is Uracil-DNA glycosylase.